Here is a 439-residue protein sequence, read N- to C-terminus: Methylenetetrahydrofolate--tRNA-(uracil-5-)-methyltransferase TrmFO (439 aa).

Residue 8-13 (GGGLAG) coordinates FAD.

It belongs to the MnmG family. TrmFO subfamily. FAD serves as cofactor.

It localises to the cytoplasm. The catalysed reaction is uridine(54) in tRNA + (6R)-5,10-methylene-5,6,7,8-tetrahydrofolate + NADH + H(+) = 5-methyluridine(54) in tRNA + (6S)-5,6,7,8-tetrahydrofolate + NAD(+). It catalyses the reaction uridine(54) in tRNA + (6R)-5,10-methylene-5,6,7,8-tetrahydrofolate + NADPH + H(+) = 5-methyluridine(54) in tRNA + (6S)-5,6,7,8-tetrahydrofolate + NADP(+). Functionally, catalyzes the folate-dependent formation of 5-methyl-uridine at position 54 (M-5-U54) in all tRNAs. The sequence is that of Methylenetetrahydrofolate--tRNA-(uracil-5-)-methyltransferase TrmFO from Dictyoglomus turgidum (strain DSM 6724 / Z-1310).